The following is a 395-amino-acid chain: Putative 8-amino-7-oxononanoate synthase (395 aa).

Arg23 is a substrate binding site. Residue 110 to 111 (GY) participates in pyridoxal 5'-phosphate binding. Residue His135 coordinates substrate. Pyridoxal 5'-phosphate-binding positions include Ser182, 207–210 (DEAH), and 239–242 (TFSK). The residue at position 242 (Lys242) is an N6-(pyridoxal phosphate)lysine. Position 356 (Thr356) interacts with substrate.

The protein belongs to the class-II pyridoxal-phosphate-dependent aminotransferase family. BioF subfamily. As to quaternary structure, homodimer. The cofactor is pyridoxal 5'-phosphate.

It catalyses the reaction 6-carboxyhexanoyl-[ACP] + L-alanine + H(+) = (8S)-8-amino-7-oxononanoate + holo-[ACP] + CO2. Its pathway is cofactor biosynthesis; biotin biosynthesis. Catalyzes the decarboxylative condensation of pimeloyl-[acyl-carrier protein] and L-alanine to produce 8-amino-7-oxononanoate (AON), [acyl-carrier protein], and carbon dioxide. The sequence is that of Putative 8-amino-7-oxononanoate synthase (bioF) from Bacillus cereus (strain G9842).